The chain runs to 711 residues: Polyribonucleotide nucleotidyltransferase (711 aa).

Mg(2+)-binding residues include D486 and D492. Positions 553–612 (PRIHTIKISTDKIKDVIGKGGSVIRALTEETGTTIEIEDDGTVKIAATDGEKAKYAIRRI) constitute a KH domain. Residues 622–690 (GRIYNSKVTR…RQGRVRLSIK (69 aa)) enclose the S1 motif domain. Residues 689-711 (IKEATEQSQPAAAPEAPASEQAE) are disordered. The segment covering 694-711 (EQSQPAAAPEAPASEQAE) has biased composition (low complexity).

It belongs to the polyribonucleotide nucleotidyltransferase family. In terms of assembly, component of the RNA degradosome, which is a multiprotein complex involved in RNA processing and mRNA degradation. Mg(2+) is required as a cofactor.

The protein localises to the cytoplasm. It catalyses the reaction RNA(n+1) + phosphate = RNA(n) + a ribonucleoside 5'-diphosphate. In terms of biological role, involved in mRNA degradation. Catalyzes the phosphorolysis of single-stranded polyribonucleotides processively in the 3'- to 5'-direction. This chain is Polyribonucleotide nucleotidyltransferase, found in Salmonella typhi.